Reading from the N-terminus, the 202-residue chain is Imidazole glycerol phosphate synthase subunit HisH (202 aa).

Residues 3–202 form the Glutamine amidotransferase type-1 domain; sequence RIVILDYGLG…KILKNFVDMC (200 aa). Residue C79 is the Nucleophile of the active site. Catalysis depends on residues H183 and E185.

In terms of assembly, heterodimer of HisH and HisF.

The protein resides in the cytoplasm. The catalysed reaction is 5-[(5-phospho-1-deoxy-D-ribulos-1-ylimino)methylamino]-1-(5-phospho-beta-D-ribosyl)imidazole-4-carboxamide + L-glutamine = D-erythro-1-(imidazol-4-yl)glycerol 3-phosphate + 5-amino-1-(5-phospho-beta-D-ribosyl)imidazole-4-carboxamide + L-glutamate + H(+). The enzyme catalyses L-glutamine + H2O = L-glutamate + NH4(+). It participates in amino-acid biosynthesis; L-histidine biosynthesis; L-histidine from 5-phospho-alpha-D-ribose 1-diphosphate: step 5/9. Functionally, IGPS catalyzes the conversion of PRFAR and glutamine to IGP, AICAR and glutamate. The HisH subunit catalyzes the hydrolysis of glutamine to glutamate and ammonia as part of the synthesis of IGP and AICAR. The resulting ammonia molecule is channeled to the active site of HisF. This chain is Imidazole glycerol phosphate synthase subunit HisH, found in Methanosarcina barkeri (strain Fusaro / DSM 804).